Here is a 262-residue protein sequence, read N- to C-terminus: Adenosylcobinamide-GDP ribazoletransferase (262 aa).

Transmembrane regions (helical) follow at residues 43-63 (YFGL…WLTQ), 66-86 (LPAG…TGGF), 120-140 (GALA…ELAL), 146-166 (AGSA…SIIF), 191-211 (LLIL…LAAL), and 242-262 (AAQQ…GNIL).

The protein belongs to the CobS family. Mg(2+) is required as a cofactor.

It is found in the cell inner membrane. It carries out the reaction alpha-ribazole + adenosylcob(III)inamide-GDP = adenosylcob(III)alamin + GMP + H(+). The enzyme catalyses alpha-ribazole 5'-phosphate + adenosylcob(III)inamide-GDP = adenosylcob(III)alamin 5'-phosphate + GMP + H(+). The protein operates within cofactor biosynthesis; adenosylcobalamin biosynthesis; adenosylcobalamin from cob(II)yrinate a,c-diamide: step 7/7. Its function is as follows. Joins adenosylcobinamide-GDP and alpha-ribazole to generate adenosylcobalamin (Ado-cobalamin). Also synthesizes adenosylcobalamin 5'-phosphate from adenosylcobinamide-GDP and alpha-ribazole 5'-phosphate. The sequence is that of Adenosylcobinamide-GDP ribazoletransferase from Shewanella baltica (strain OS195).